A 171-amino-acid polypeptide reads, in one-letter code: MKADLHIHTKYSGIGKFWKLKFPDSVEEPRNILKVAKKKGIEVVAITDHNTIRGGVETKKLEKEFGVEVVIGSEIMTTEGEIIGLFLNEDIPKGLSPEETIEKIKEQGGLAIAPHPYSPICKALGDRIFDLDLDGVEVFNAYHRDGIVNNIALNKVIKELPQKAFCIYWRE.

The protein to M.jannaschii MJ0417.

This is an uncharacterized protein from Methanocaldococcus jannaschii (strain ATCC 43067 / DSM 2661 / JAL-1 / JCM 10045 / NBRC 100440) (Methanococcus jannaschii).